A 927-amino-acid polypeptide reads, in one-letter code: Valine--tRNA ligase (927 aa).

The 'HIGH' region motif lies at 45 to 55 (PNVTGSLHMGH). A 'KMSKS' region motif is present at residues 571-575 (KMSKS). K574 contacts ATP. A coiled-coil region spans residues 856 to 917 (SLIDLAAEAA…EYRDAQDKLA (62 aa)).

This sequence belongs to the class-I aminoacyl-tRNA synthetase family. ValS type 1 subfamily. In terms of assembly, monomer.

Its subcellular location is the cytoplasm. The catalysed reaction is tRNA(Val) + L-valine + ATP = L-valyl-tRNA(Val) + AMP + diphosphate. Functionally, catalyzes the attachment of valine to tRNA(Val). As ValRS can inadvertently accommodate and process structurally similar amino acids such as threonine, to avoid such errors, it has a 'posttransfer' editing activity that hydrolyzes mischarged Thr-tRNA(Val) in a tRNA-dependent manner. In Mesorhizobium japonicum (strain LMG 29417 / CECT 9101 / MAFF 303099) (Mesorhizobium loti (strain MAFF 303099)), this protein is Valine--tRNA ligase.